The sequence spans 878 residues: Phosphoenolpyruvate carboxylase (878 aa).

Catalysis depends on residues His-140 and Lys-545.

Belongs to the PEPCase type 1 family. Mg(2+) is required as a cofactor.

The enzyme catalyses oxaloacetate + phosphate = phosphoenolpyruvate + hydrogencarbonate. Its function is as follows. Forms oxaloacetate, a four-carbon dicarboxylic acid source for the tricarboxylic acid cycle. This Pseudomonas syringae pv. tomato (strain ATCC BAA-871 / DC3000) protein is Phosphoenolpyruvate carboxylase.